We begin with the raw amino-acid sequence, 378 residues long: MASLRKTHPLLKIANDALIDLPAPSNISIWWNSGSLLGLCLIIQILTGLFLSMHYTPDTTTAFSSVAHICRDVNYGWLIRNMHANGASFFFICIYFHIGRGLYYGSYLYKETXNVGVILLLLVMMTAFVGYVLPWGQMSFWGATVITNLLSAVPYIGNSLVQWLWGGFSVDNATLTRFFAFLFLLPFIIAAMTMIHLIFLHETGSTNPVGLNSNAEKIPFHPYYSFKDLLGFIMLLTILVSLALFSPNLLGDPDNLHPANPLVTPPHIKPEWYFLFAYAILRSIPNKLGGVLALLFSILVLLLMPILHTSKLRTLTFRPLTQFLFWLLIADVAVLTWIGGMPVEHPFIIIGQIASALYFTIFLVLFPTAGLLENKMLT.

4 helical membrane passes run 33 to 53, 77 to 98, 113 to 133, and 178 to 198; these read SGSL…FLSM, WLIR…YFHI, XNVG…GYVL, and FFAF…IHLI. 2 residues coordinate heme b: histidine 83 and histidine 97. Histidine 196 is a binding site for heme b. Histidine 201 contributes to the a ubiquinone binding site. Transmembrane regions (helical) follow at residues 226–246, 288–308, 320–340, and 347–367; these read FKDL…ALFS, LGGV…PILH, LTQF…WIGG, and FIII…VLFP.

It belongs to the cytochrome b family. In terms of assembly, the cytochrome bc1 complex contains 3 respiratory subunits (MT-CYB, CYC1 and UQCRFS1), 2 core proteins (UQCRC1 and UQCRC2) and probably 6 low-molecular weight proteins. Heme b is required as a cofactor.

It is found in the mitochondrion inner membrane. Its function is as follows. Component of the ubiquinol-cytochrome c reductase complex (complex III or cytochrome b-c1 complex) that is part of the mitochondrial respiratory chain. The b-c1 complex mediates electron transfer from ubiquinol to cytochrome c. Contributes to the generation of a proton gradient across the mitochondrial membrane that is then used for ATP synthesis. This is Cytochrome b (mt-cyb) from Nannacara anomala (Goldeneye cichlid).